Reading from the N-terminus, the 300-residue chain is Probable alpha-L-glutamate ligase (300 aa).

Positions 104-287 (LQLLARQGID…IAGRMIEYIE (184 aa)) constitute an ATP-grasp domain. Residues lysine 141, 178-179 (EY), aspartate 187, and 211-213 (RSN) each bind ATP. 3 residues coordinate Mg(2+): aspartate 248, glutamate 260, and asparagine 262. Residues aspartate 248, glutamate 260, and asparagine 262 each contribute to the Mn(2+) site.

This sequence belongs to the RimK family. Mg(2+) is required as a cofactor. Mn(2+) serves as cofactor.

This is Probable alpha-L-glutamate ligase from Serratia proteamaculans (strain 568).